Consider the following 644-residue polypeptide: Threonine--tRNA ligase (644 aa).

A TGS domain is found at 1–61 (MINVTLPDGS…DGDAQVAIIT (61 aa)). The catalytic stretch occupies residues 243–536 (DHRKLGKQME…LIESYAGKLP (294 aa)). Zn(2+) contacts are provided by Cys-336, His-387, and His-513.

The protein belongs to the class-II aminoacyl-tRNA synthetase family. Homodimer. Requires Zn(2+) as cofactor.

It localises to the cytoplasm. It catalyses the reaction tRNA(Thr) + L-threonine + ATP = L-threonyl-tRNA(Thr) + AMP + diphosphate + H(+). Functionally, catalyzes the attachment of threonine to tRNA(Thr) in a two-step reaction: L-threonine is first activated by ATP to form Thr-AMP and then transferred to the acceptor end of tRNA(Thr). Also edits incorrectly charged L-seryl-tRNA(Thr). The polypeptide is Threonine--tRNA ligase (Maricaulis maris (strain MCS10) (Caulobacter maris)).